A 963-amino-acid polypeptide reads, in one-letter code: Putative RNA Helicase B962L (963 aa).

The region spanning 43-229 (IPTSLADRVL…FGIGKENIIL (187 aa)) is the Helicase ATP-binding domain. 56 to 63 (SRTGSGKS) contributes to the ATP binding site. Residues 167 to 170 (DEAH) carry the DEAH box motif. Residues 253–459 (ACETALTIHK…TIKKNKEGVF (207 aa)) enclose the Helicase C-terminal domain. Residues 521-541 (GYFWQAAISDIATILAVVSVV) form a helical membrane-spanning segment.

It belongs to the DEAD box helicase family. DEAH subfamily.

The protein resides in the host membrane. It localises to the virion. It carries out the reaction ATP + H2O = ADP + phosphate + H(+). This is Putative RNA Helicase B962L from Ornithodoros (relapsing fever ticks).